An 868-amino-acid chain; its full sequence is MASFPETDFQICLLCKEMCGSPAPLSSNSSASSSSSQTSTSSGGGGGGPGAAARRLHVLPCLAFCRPCLEAHRGGAPGEPLKLRCPVCDQKVVLAEAAGMDARPSSAFLLSNLLDAVVATADEPPPKNGRAGAAAGAGGHGSNHRHHAHHAHPRAAASAPPPPLPPAPPPPAPPRSAPGGPAGSPSALLLRRPHGCSSCDEGNAASSRCLDCQEHLCDNCVRAHQRVRLTKDHYIERGPPGPAAAAAAAAAQQLGLGPPFPGAPFSLLSVFPERLGFCQHHDDEVLHLYCDTCSVPICRECTVGRHGGHSFVYLQEALQDSRALTIQLLADAQQGRQAIQLSIEQAQTVAEQVEMKAKVVQSEVKAVTARHKKALEERECELLWKVEKIRQVKAKSLYLQVEKLRQNLNKLESTISAVQQVLEEGRALDILLARDRMLAQVQELKTVRSLLQPQEDDRVMFTPPDQALYLAIKSFGFVSSGAFAPLTKATGDGLKRALQGKVASFTVIGYDHDGEPRLSGGDLMSAVVLGPDGNLFGAEVSDQQNGTYVVSYRPQLEGEHLVSVTLCNQHIENSPFKVVVKSGRSYVGIGLPGLSFGSEGDSDGKLCRPWGVSVDKEGYIVVADRSNNRIQVFKPCGAFHHKFGTLGSRPGQFDRPAGVACDASRRIVVADKDNHRIQIFTFEGQFLLKFGEKGTKNGQFNYPWDVAVNSEGKILVSDTRNHRIQLFGPDGVFLNKYGFEGALWKHFDSPRGVAFNHEGHLVVTDFNNHRLLVIHPDCQSARFLGSEGTGNGQFLRPQGVAVDQEGRIIVADSRNHRVQMFESNGSFLCKFGAQGSGFGQMDRPSGIAVTPDGMIVVVDFGNNRILIF.

The residue at position 2 (alanine 2) is an N-acetylalanine. The segment at 12-89 (CLLCKEMCGS…PLKLRCPVCD (78 aa)) adopts an RING-type zinc-finger fold. Residues 26–41 (SSNSSASSSSSQTSTS) show a composition bias toward low complexity. Disordered regions lie at residues 26–50 (SSNS…GGPG) and 121–186 (ADEP…GSPS). Residues 142–153 (SNHRHHAHHAHP) show a composition bias toward basic residues. Positions 159-176 (APPPPLPPAPPPPAPPRS) are enriched in pro residues. The span at 177 to 186 (APGGPAGSPS) shows a compositional bias: low complexity. Residues 191 to 238 (RRPHGCSSCDEGNAASSRCLDCQEHLCDNCVRAHQRVRLTKDHYIERG) form a B box-type 1; atypical zinc finger. The B box-type 2 zinc finger occupies 273–314 (ERLGFCQHHDDEVLHLYCDTCSVPICRECTVGRHGGHSFVYL). Zn(2+) contacts are provided by cysteine 278, histidine 281, cysteine 301, and histidine 306. Positions 391–427 (QVKAKSLYLQVEKLRQNLNKLESTISAVQQVLEEGRA) form a coiled coil. Residues 479–580 (SSGAFAPLTK…IENSPFKVVV (102 aa)) form a Filamin repeat. 6 NHL repeats span residues 593-636 (GLSF…FKPC), 640-683 (HHKF…FTFE), 687-730 (LLKF…FGPD), 734-777 (LNKY…IHPD), 781-824 (ARFL…FESN), and 828-868 (LCKF…ILIF).

The protein belongs to the TRIM/RBCC family. In terms of assembly, interacts (via NHL repeats) with AGO2; the interaction increases in presence of RNA. Interacts with HSP90AA1. Interacts (via NHL repeats) with MOV10, PABPC1, PUM1, PUM2, STAU2, XRN1 and XRN2 in an RNA-dependent manner. Interacts with SHCBP1; leading to enhance its stability. In terms of processing, autoubiquitinated.

It is found in the cytoplasm. The protein resides in the P-body. The catalysed reaction is S-ubiquitinyl-[E2 ubiquitin-conjugating enzyme]-L-cysteine + [acceptor protein]-L-lysine = [E2 ubiquitin-conjugating enzyme]-L-cysteine + N(6)-ubiquitinyl-[acceptor protein]-L-lysine.. The protein operates within protein modification; protein ubiquitination. In terms of biological role, E3 ubiquitin-protein ligase that cooperates with the microRNAs (miRNAs) machinery and promotes embryonic stem cells proliferation and maintenance. Binds to miRNAs and associates with AGO2, participating in post-transcriptional repression of transcripts such as CDKN1A. In addition, participates in post-transcriptional mRNA repression in a miRNA independent mechanism. Facilitates the G1-S transition to promote rapid embryonic stem cell self-renewal by repressing CDKN1A expression. Required to maintain proliferation and prevent premature differentiation of neural progenitor cells during early neural development: positively regulates FGF signaling by controlling the stability of SHCBP1. Specific regulator of miRNA biogenesis. Binds to miRNA MIR29A hairpin and postranscriptionally modulates MIR29A levels, which indirectly regulates TET proteins expression. The protein is E3 ubiquitin-protein ligase TRIM71 (TRIM71) of Bos taurus (Bovine).